The chain runs to 224 residues: Ion-translocating oxidoreductase complex subunit E (224 aa).

The next 5 membrane-spanning stretches (helical) occupy residues 51 to 71 (LGLG…VSLF), 81 to 101 (IPIY…LMNA), 105 to 125 (SLYQ…IVIG), 140 to 160 (MFDG…LGAI), and 194 to 214 (HFLL…ILAI).

The protein belongs to the NqrDE/RnfAE family. As to quaternary structure, the complex is composed of six subunits: RnfA, RnfB, RnfC, RnfD, RnfE and RnfG.

Its subcellular location is the cell inner membrane. In terms of biological role, part of a membrane-bound complex that couples electron transfer with translocation of ions across the membrane. The polypeptide is Ion-translocating oxidoreductase complex subunit E (Pasteurella multocida (strain Pm70)).